We begin with the raw amino-acid sequence, 124 residues long: Large ribosomal subunit protein bL12 (124 aa).

It belongs to the bacterial ribosomal protein bL12 family. In terms of assembly, homodimer. Part of the ribosomal stalk of the 50S ribosomal subunit. Forms a multimeric L10(L12)X complex, where L10 forms an elongated spine to which 2 to 4 L12 dimers bind in a sequential fashion. Binds GTP-bound translation factors.

Functionally, forms part of the ribosomal stalk which helps the ribosome interact with GTP-bound translation factors. Is thus essential for accurate translation. The chain is Large ribosomal subunit protein bL12 from Dehalococcoides mccartyi (strain ATCC BAA-2266 / KCTC 15142 / 195) (Dehalococcoides ethenogenes (strain 195)).